Here is a 210-residue protein sequence, read N- to C-terminus: Cell division protein SepF (210 aa).

Composition is skewed to low complexity over residues 36 to 47 (QQQQTPAAVPTQ) and 59 to 69 (RASATTATTAS). Disordered stretches follow at residues 36 to 69 (QQQQTPAAVPTQEESRSNRRLRNRASATTATTAS) and 182 to 210 (NEMSQTQPRPRVPNSGSQVWQPEQIQMIQ).

This sequence belongs to the SepF family. As to quaternary structure, homodimer. Interacts with FtsZ.

Its subcellular location is the cytoplasm. Its function is as follows. Cell division protein that is part of the divisome complex and is recruited early to the Z-ring. Probably stimulates Z-ring formation, perhaps through the cross-linking of FtsZ protofilaments. Its function overlaps with FtsA. The protein is Cell division protein SepF of Trichodesmium erythraeum (strain IMS101).